A 68-amino-acid chain; its full sequence is UPF0434 protein H16_A0605 (68 aa).

It belongs to the UPF0434 family.

This chain is UPF0434 protein H16_A0605, found in Cupriavidus necator (strain ATCC 17699 / DSM 428 / KCTC 22496 / NCIMB 10442 / H16 / Stanier 337) (Ralstonia eutropha).